We begin with the raw amino-acid sequence, 212 residues long: Methylthioribulose-1-phosphate dehydratase (212 aa).

Residues His98 and His100 each coordinate Zn(2+).

This sequence belongs to the aldolase class II family. MtnB subfamily. Zn(2+) serves as cofactor.

It catalyses the reaction 5-(methylsulfanyl)-D-ribulose 1-phosphate = 5-methylsulfanyl-2,3-dioxopentyl phosphate + H2O. Its pathway is amino-acid biosynthesis; L-methionine biosynthesis via salvage pathway; L-methionine from S-methyl-5-thio-alpha-D-ribose 1-phosphate: step 2/6. In terms of biological role, catalyzes the dehydration of methylthioribulose-1-phosphate (MTRu-1-P) into 2,3-diketo-5-methylthiopentyl-1-phosphate (DK-MTP-1-P). The protein is Methylthioribulose-1-phosphate dehydratase of Picosynechococcus sp. (strain ATCC 27264 / PCC 7002 / PR-6) (Agmenellum quadruplicatum).